The following is a 734-amino-acid chain: Photosystem I P700 chlorophyll a apoprotein A2 (734 aa).

8 consecutive transmembrane segments (helical) span residues Ile-46–Ala-69, Leu-135–Gln-158, Leu-175–Ile-199, Val-273–Tyr-291, Ile-330–Tyr-353, Ala-369–Ile-395, Ala-417–His-439, and Phe-517–Val-535. [4Fe-4S] cluster is bound by residues Cys-559 and Cys-568. The next 2 membrane-spanning stretches (helical) occupy residues Asp-575–Trp-596 and Leu-643–Ile-665. Residues His-654, Met-662, and Tyr-670 each contribute to the chlorophyll a site. Trp-671 lines the phylloquinone pocket. Residues Leu-707 to Ala-727 form a helical membrane-spanning segment.

It belongs to the PsaA/PsaB family. As to quaternary structure, the PsaA/B heterodimer binds the P700 chlorophyll special pair and subsequent electron acceptors. PSI consists of a core antenna complex that captures photons, and an electron transfer chain that converts photonic excitation into a charge separation. The eukaryotic PSI reaction center is composed of at least 11 subunits. The cofactor is P700 is a chlorophyll a/chlorophyll a' dimer, A0 is one or more chlorophyll a, A1 is one or both phylloquinones and FX is a shared 4Fe-4S iron-sulfur center..

It is found in the plastid. The protein resides in the chloroplast thylakoid membrane. It carries out the reaction reduced [plastocyanin] + hnu + oxidized [2Fe-2S]-[ferredoxin] = oxidized [plastocyanin] + reduced [2Fe-2S]-[ferredoxin]. PsaA and PsaB bind P700, the primary electron donor of photosystem I (PSI), as well as the electron acceptors A0, A1 and FX. PSI is a plastocyanin-ferredoxin oxidoreductase, converting photonic excitation into a charge separation, which transfers an electron from the donor P700 chlorophyll pair to the spectroscopically characterized acceptors A0, A1, FX, FA and FB in turn. Oxidized P700 is reduced on the lumenal side of the thylakoid membrane by plastocyanin. The chain is Photosystem I P700 chlorophyll a apoprotein A2 from Pisum sativum (Garden pea).